Reading from the N-terminus, the 1157-residue chain is MAVPARTCGASWPGPVRTARPWPGRGPRPCPDPRGPASGPARPLLLLLPPLLLLPLLTAPGASAYSFPQQHTMQHWARRLEQEIDGVMRIFGGVQQLREIYKDNRNLFDVQENEPQKLVEKVAGDIESLLDRKVQALKRLADAAENFQKAHRWQDNIKEEDIMYYDAKADAELDDPESEDMERGSKTSALRLDFIEEPNFKNKVNYSYTAVQIPTDIYKGSTVILNELNWTEALENVFIENRRQDPTLLWQVFGSATGVTRYYPATPWRAPKKIDLYDVRRRPWYIQGASSPKDMVIIVDVSGSVSGLTLKLMKTSVCEMLDTLSDDDYVNVASFNEKAQPVSCFTHLVQANVRNKKVFKEAVQGMVAKGTTGYKAGFEYAFDQLQNSNITRANCNKMIMMFTDGGEDRVQDVFEKYNWPNRTVRVFTFSVGQHNYDVTPLQWMACTNKGYYFEIPSIGAIRINTQEYLDVLGRPMVLAGKDAKQVQWTNVYEDALGLGLVVTGTLPVFNLTQDGPGDKKNQLILGVMGIDVALNDIKRLTPNYTLGANGYVFAIDLNGYVLLHPNLKPQITNFREPVTLDFLDAELEDENKEEIRRSMIDGDKGHKQIRTLVKSLDERYIDEVIRNYTWVPIRSTNYSLGLVLPPYSTYYLQANLSDQILQVKLPISKLKDFEFLLPSSFESEGHVFIAPREYCKDLNASDNNTEFLKNFIELMEKVTPDSKQCNNFLLHNLILDTGITQQLVERVWRDQDLNTYSLLAVFAATDGGITRVFPNKAAEDWTENPEPFNASFYRRSLDNRGYIFKPPHQDSLLRPLELENDTVGVLVSTAVELSLGRRTLRPAVVGVKLDLEAWAEKFKVLASNRTHQDQPQKQCGPSSHCEMDCEVNNEDLLCVLIDDGGFLVLSNQNHQWDQVGRFFSEVDANLMLALYNNSFYTRKESYDYQAACAPQPPGNLGAAPRGVFVPTIADFLNLAWWTSAAAWSLFQQLLYGLIYHSWFQADPAEAEGSPETRESSCVMKQTQYYFGSVNASYNAIIDCGNCSRLFHAQRLTNTNLLFVVAEKPLCSQCEVGRLLQKETHCPADGPEQCELVQRPRYRTGPHICFDYNATEDTSDCGRGASFPPSLGVLVSLQLLLLLGLPPRPQPQIHSFTPSRRL.

Positions 1-18 (MAVPARTCGASWPGPVRT) are cleaved as a signal peptide. The interval 1–37 (MAVPARTCGASWPGPVRTARPWPGRGPRPCPDPRGPA) is disordered. Over 19-1119 (ARPWPGRGPR…TEDTSDCGRG (1101 aa)) the chain is Extracellular. Residues 24-34 (GRGPRPCPDPR) show a composition bias toward pro residues. An N-linked (GlcNAc...) asparagine glycan is attached at Asn-205. One can recognise a VWFA domain in the interval 294-472 (DMVIIVDVSG…INTQEYLDVL (179 aa)). Residues Asp-300, Ser-302, and Ser-304 each coordinate a divalent metal cation. The MIDAS-like motif motif lies at 300-304 (DVSGS). 6 N-linked (GlcNAc...) asparagine glycosylation sites follow: Asn-389, Asn-421, Asn-510, Asn-543, Asn-627, and Asn-864. Residues Cys-446 and Cys-1104 are joined by a disulfide bond. One can recognise a Cache domain in the interval 488 to 577 (WTNVYEDALG…KPQITNFREP (90 aa)). The helical transmembrane segment at 1120 to 1140 (ASFPPSLGVLVSLQLLLLLGL) threads the bilayer. Residues 1141-1157 (PPRPQPQIHSFTPSRRL) lie on the Cytoplasmic side of the membrane.

The protein belongs to the calcium channel subunit alpha-2/delta family. Dimer formed of alpha-2-2 and delta-2 chains; disulfide-linked. Voltage-dependent calcium channels are multisubunit complexes, consisting of alpha-1 (CACNA1), alpha-2 (CACNA2D), beta (CACNB) and delta (CACNA2D) subunits in a 1:1:1:1 ratio. In terms of processing, N-glycosylated. Post-translationally, may be proteolytically processed into subunits alpha-2-2 and delta-2 that are disulfide-linked. It is however unclear whether such cleavage really takes place in vivo and has a functional role. In terms of tissue distribution, in heart, it is highly expressed in atrium and at lower level in ventricle.

The protein resides in the membrane. The alpha-2/delta subunit of voltage-dependent calcium channels regulates calcium current density and activation/inactivation kinetics of the calcium channel. Acts as a regulatory subunit for P/Q-type calcium channel (CACNA1A), N-type (CACNA1B), L-type (CACNA1C OR CACNA1D) and possibly T-type (CACNA1G). Overexpression induces apoptosis. This is Voltage-dependent calcium channel subunit alpha-2/delta-2 (Cacna2d2) from Rattus norvegicus (Rat).